A 100-amino-acid chain; its full sequence is Urease subunit gamma (100 aa).

This sequence belongs to the urease gamma subunit family. As to quaternary structure, heterotrimer of UreA (gamma), UreB (beta) and UreC (alpha) subunits. Three heterotrimers associate to form the active enzyme.

Its subcellular location is the cytoplasm. The enzyme catalyses urea + 2 H2O + H(+) = hydrogencarbonate + 2 NH4(+). It participates in nitrogen metabolism; urea degradation; CO(2) and NH(3) from urea (urease route): step 1/1. The protein is Urease subunit gamma of Paracidovorax citrulli (strain AAC00-1) (Acidovorax citrulli).